We begin with the raw amino-acid sequence, 181 residues long: NADH-quinone oxidoreductase subunit I (181 aa).

2 4Fe-4S ferredoxin-type domains span residues 52–81 (TRDSSGRERCVACNLCAVACPVGCISLKKG) and 91–120 (KFFRINFSRCIFCGMCEEACPTAAIQLTPD). The [4Fe-4S] cluster site is built by Cys61, Cys64, Cys67, Cys71, Cys100, Cys103, Cys106, and Cys110.

This sequence belongs to the complex I 23 kDa subunit family. NDH-1 is composed of 13 different subunits. Subunits NuoA, H, J, K, L, M, N constitute the membrane sector of the complex. It depends on [4Fe-4S] cluster as a cofactor.

It is found in the cell inner membrane. The enzyme catalyses a quinone + NADH + 5 H(+)(in) = a quinol + NAD(+) + 4 H(+)(out). NDH-1 shuttles electrons from NADH, via FMN and iron-sulfur (Fe-S) centers, to quinones in the respiratory chain. The immediate electron acceptor for the enzyme in this species is believed to be ubiquinone. Couples the redox reaction to proton translocation (for every two electrons transferred, four hydrogen ions are translocated across the cytoplasmic membrane), and thus conserves the redox energy in a proton gradient. This Blochmanniella pennsylvanica (strain BPEN) protein is NADH-quinone oxidoreductase subunit I.